A 146-amino-acid polypeptide reads, in one-letter code: NADH-quinone oxidoreductase subunit A (146 aa).

3 helical membrane-spanning segments follow: residues 16–36 (FAIFLIVAIGLCCLMLIGGWF), 68–88 (FYLVAMFFVIFDVEALYLFAW), and 98–118 (VGFVEAAIFILVLLAGLVYLV).

It belongs to the complex I subunit 3 family. In terms of assembly, NDH-1 is composed of 13 different subunits. Subunits NuoA, H, J, K, L, M, N constitute the membrane sector of the complex.

The protein localises to the cell inner membrane. It carries out the reaction a quinone + NADH + 5 H(+)(in) = a quinol + NAD(+) + 4 H(+)(out). In terms of biological role, NDH-1 shuttles electrons from NADH, via FMN and iron-sulfur (Fe-S) centers, to quinones in the respiratory chain. The immediate electron acceptor for the enzyme in this species is believed to be ubiquinone. Couples the redox reaction to proton translocation (for every two electrons transferred, four hydrogen ions are translocated across the cytoplasmic membrane), and thus conserves the redox energy in a proton gradient. This Enterobacter sp. (strain 638) protein is NADH-quinone oxidoreductase subunit A.